The chain runs to 234 residues: Membrane glycoprotein RL11 (234 aa).

Residues 1–23 (MQTYSTPLTLIIVTSLFLFTTQG) form the signal peptide. The chain crosses the membrane as a helical span at residues 183-203 (LHCAWVSGLMIFVGALVICFL).

It is found in the host membrane. The protein is Membrane glycoprotein RL11 (RL11) of Human cytomegalovirus (strain Merlin) (HHV-5).